The chain runs to 355 residues: Trans-enoyl reductase (355 aa).

45 to 48 (VDTK) is a binding site for NADP(+). Residue 131 to 138 (ISFMTTGL) coordinates substrate. Residues 166–169 (SSAT), 189–192 (SPRN), tyrosine 207, and 254–255 (LE) contribute to the NADP(+) site. 275–279 (GPQML) contributes to the substrate binding site. 344–345 (IS) is an NADP(+) binding site.

This sequence belongs to the zinc-containing alcohol dehydrogenase family. Monomer.

It carries out the reaction L-serine + 7 malonyl-CoA + acetyl-CoA + 2 S-adenosyl-L-methionine + ATP + 8 NADPH + 11 H(+) = (5S)-3-[(2E,6R,8E,10E,12E)-2,6-dimethyltetradeca-2,8,10,12-tetraenoyl]-5-(hydroxymethyl)pyrrolidine-2,4-dione + AMP + 2 S-adenosyl-L-homocysteine + 7 CO2 + diphosphate + 8 NADP(+) + 8 CoA + 6 H2O. The protein operates within mycotoxin biosynthesis. Hybrid PKS-NRPS synthetase; part of the gene cluster that mediates the biosynthesis of trichosetin, a trans-fused decalin-containing tetramic acid with antimicrobial activity. The PKS module of PKS-NRPS1 together with the enoylreductase (ER) catalyze the formation of the polyketide unit which is then conjugated to L-serine by the condensation domain of the PKS-NRPS1 NRPS module. Activity of the Dieckmann cyclase domain (RED) results in release of the Dieckmann product intermediate. Diels-Alderase (DA) is involved in endo-selective Diels-Alder cycloaddition to form the decalin ring, leading to the production of N-desmethylequisetin also called trichosetin. The cluster does not contain the equisetin N-methyltransferase and consequently, trichosetin is isolated as final product. The protein is Trans-enoyl reductase of Gibberella fujikuroi (strain CBS 195.34 / IMI 58289 / NRRL A-6831) (Bakanae and foot rot disease fungus).